Consider the following 271-residue polypeptide: GATA transcription factor 19 (271 aa).

The disordered stretch occupies residues 1-23 (MAAEPPADGRDPPADDGAAGDGA). A Tify domain is found at 33-68 (LSAASEQLTLVYQGEVYVFDPVPPQKVQAVLLVLGG). A CCT domain is found at 95–137 (RIASLMRFREKRKERCFDKKIRYSVRKEVAQKMKRRKGQFAGR). Residues 166–193 (CQNCGISSRLTPAMRRGPAGPRSLCNAC) form a GATA-type zinc finger. Residues 238–271 (NQTTMKTDTEMVPEQEQKADVLPPTKEEDSMATS) are disordered. The segment covering 252 to 271 (QEQKADVLPPTKEEDSMATS) has biased composition (basic and acidic residues).

It belongs to the type IV zinc-finger family. Class C subfamily.

Its subcellular location is the nucleus. Functionally, transcriptional activator that specifically binds 5'-GATA-3' or 5'-GAT-3' motifs within gene promoters. The chain is GATA transcription factor 19 from Oryza sativa subsp. indica (Rice).